The sequence spans 311 residues: tRNA-cytidine(32) 2-sulfurtransferase (311 aa).

Residues 47–52 (SGGKDS) carry the PP-loop motif motif. The [4Fe-4S] cluster site is built by cysteine 122, cysteine 125, and cysteine 213.

This sequence belongs to the TtcA family. In terms of assembly, homodimer. Mg(2+) serves as cofactor. Requires [4Fe-4S] cluster as cofactor.

It localises to the cytoplasm. It catalyses the reaction cytidine(32) in tRNA + S-sulfanyl-L-cysteinyl-[cysteine desulfurase] + AH2 + ATP = 2-thiocytidine(32) in tRNA + L-cysteinyl-[cysteine desulfurase] + A + AMP + diphosphate + H(+). It participates in tRNA modification. Catalyzes the ATP-dependent 2-thiolation of cytidine in position 32 of tRNA, to form 2-thiocytidine (s(2)C32). The sulfur atoms are provided by the cysteine/cysteine desulfurase (IscS) system. This chain is tRNA-cytidine(32) 2-sulfurtransferase, found in Shigella dysenteriae serotype 1 (strain Sd197).